The following is a 351-amino-acid chain: Holliday junction branch migration complex subunit RuvB (351 aa).

The interval 1 to 186 is large ATPase domain (RuvB-L); sequence MDEKIETRLI…FGIVQRLEFY (186 aa). Residues Ile25, Arg26, Gly67, Lys70, Thr71, Thr72, 133–135, Arg176, Tyr186, and Arg223 contribute to the ATP site; that span reads EDF. Thr71 contacts Mg(2+). The small ATPAse domain (RuvB-S) stretch occupies residues 187–257; that stretch reads RIPDLIHIVK…IAKEALDLLN (71 aa). A head domain (RuvB-H) region spans residues 260–351; the sequence is IRGLDVMDRK…ENFDLLGKVE (92 aa). DNA is bound by residues Arg296, Arg315, and Arg320.

This sequence belongs to the RuvB family. As to quaternary structure, homohexamer. Forms an RuvA(8)-RuvB(12)-Holliday junction (HJ) complex. HJ DNA is sandwiched between 2 RuvA tetramers; dsDNA enters through RuvA and exits via RuvB. An RuvB hexamer assembles on each DNA strand where it exits the tetramer. Each RuvB hexamer is contacted by two RuvA subunits (via domain III) on 2 adjacent RuvB subunits; this complex drives branch migration. In the full resolvosome a probable DNA-RuvA(4)-RuvB(12)-RuvC(2) complex forms which resolves the HJ.

The protein resides in the cytoplasm. It catalyses the reaction ATP + H2O = ADP + phosphate + H(+). In terms of biological role, the RuvA-RuvB-RuvC complex processes Holliday junction (HJ) DNA during genetic recombination and DNA repair, while the RuvA-RuvB complex plays an important role in the rescue of blocked DNA replication forks via replication fork reversal (RFR). RuvA specifically binds to HJ cruciform DNA, conferring on it an open structure. The RuvB hexamer acts as an ATP-dependent pump, pulling dsDNA into and through the RuvAB complex. RuvB forms 2 homohexamers on either side of HJ DNA bound by 1 or 2 RuvA tetramers; 4 subunits per hexamer contact DNA at a time. Coordinated motions by a converter formed by DNA-disengaged RuvB subunits stimulates ATP hydrolysis and nucleotide exchange. Immobilization of the converter enables RuvB to convert the ATP-contained energy into a lever motion, pulling 2 nucleotides of DNA out of the RuvA tetramer per ATP hydrolyzed, thus driving DNA branch migration. The RuvB motors rotate together with the DNA substrate, which together with the progressing nucleotide cycle form the mechanistic basis for DNA recombination by continuous HJ branch migration. Branch migration allows RuvC to scan DNA until it finds its consensus sequence, where it cleaves and resolves cruciform DNA. The chain is Holliday junction branch migration complex subunit RuvB from Coxiella burnetii (strain RSA 331 / Henzerling II).